Reading from the N-terminus, the 30-residue chain is Rothein 3.3 (30 aa).

Position 30 is a leucine amide (Leu30).

Expressed by the skin dorsal glands.

It localises to the secreted. Lacks antimicrobial activity. Does not inhibit the formation of NO by neuronal nitric oxide. This is Rothein 3.3 from Litoria rothii (Roth's tree frog).